Consider the following 742-residue polypeptide: NAD(P)H-quinone oxidoreductase subunit 5, chloroplastic (742 aa).

16 consecutive transmembrane segments (helical) span residues 9 to 29 (WIIPFLPLPVPLLIGAGLLFF), 39 to 59 (IWAFSSISLLSIVMIFSMKLA), 91 to 111 (PLTSIMSMLITTVAILVLIYS), 125 to 145 (FAYMSFFNTSMLGLVTSSNLI), 147 to 167 (IYIFWELVGMCSYLLIGFWFT), 185 to 205 (GDFGLLLGILGLYWITGSFEF), 224 to 244 (LFCILCAFLLFAGAVAKSAQF), 258 to 278 (TPISALIHAATMVAAGIFLVA), 280 to 300 (LLPLFVVIPYIMYVISFIGII), 327 to 347 (LGYMMLALGMGSYRTALFHLI), 354 to 374 (ALLFLASGSLIHSMGTIVGYS), 396 to 416 (TSFLIGTLSLCGIPPLACFWS), 425 to 445 (WVYSPIFAIIAYFTAGLTAFY), 549 to 569 (LFPLIILIMFTLFVGFIGIPF), 603 to 623 (FVINAIFSISIAFFGIFIAFF), and 721 to 741 (ISSYLFWYLLYVSIFLFIFTF).

The protein belongs to the complex I subunit 5 family. In terms of assembly, NDH is composed of at least 16 different subunits, 5 of which are encoded in the nucleus.

The protein localises to the plastid. The protein resides in the chloroplast thylakoid membrane. It carries out the reaction a plastoquinone + NADH + (n+1) H(+)(in) = a plastoquinol + NAD(+) + n H(+)(out). The catalysed reaction is a plastoquinone + NADPH + (n+1) H(+)(in) = a plastoquinol + NADP(+) + n H(+)(out). Functionally, NDH shuttles electrons from NAD(P)H:plastoquinone, via FMN and iron-sulfur (Fe-S) centers, to quinones in the photosynthetic chain and possibly in a chloroplast respiratory chain. The immediate electron acceptor for the enzyme in this species is believed to be plastoquinone. Couples the redox reaction to proton translocation, and thus conserves the redox energy in a proton gradient. This is NAD(P)H-quinone oxidoreductase subunit 5, chloroplastic (ndhF) from Spinacia oleracea (Spinach).